A 142-amino-acid polypeptide reads, in one-letter code: Protein tost-1 (142 aa).

Residues 97–123 (KVFEEEDKENAPTKKAVLKPSSTDEKK) form a disordered region.

In terms of assembly, component of the tost-1 variant of the PETISCO complex (also called the pid-3, erh-2, tofu-6, and ife-3 small RNA complex) containing at least tost-1, tofu-6, ife-3, pid-3, and erh-2, which plays an essential role in embryogenesis. Within the complex interacts with erh-2. Within the complex interacts with pid-3 and tofu-6. In contrast to the pid-1 variant of the PETISCO complex, the tost-1 variant of the PETISCO complex plays a minor role in the biogenesis of a class of 21 nucleotide PIWI-interacting RNAs (piRNAs) that possess a uracil residue at the 5'-end (also called 21U-RNAs). In terms of tissue distribution, expressed in the germline.

It is found in the cytoplasm. The protein localises to the nucleus. In terms of biological role, component of the tost-1 variant of the PETISCO complex which plays an essential role in embryogenesis. Within the complex acts as an adapter which binds to the complex via erh-2. Does not seem to play a role in the biogenesis of a class of 21 nucleotide PIWI-interacting RNAs (piRNAs) that possess a uracil residue at the 5'-end (also called 21U-RNAs). May inhibit 21U-RNA accumulation. Required for chromosome segregation and cell division in early embryos. This Caenorhabditis elegans protein is Protein tost-1.